A 451-amino-acid polypeptide reads, in one-letter code: UDP-N-acetylmuramoylalanine--D-glutamate ligase (451 aa).

Gly-119–Thr-125 contributes to the ATP binding site.

The protein belongs to the MurCDEF family.

Its subcellular location is the cytoplasm. The catalysed reaction is UDP-N-acetyl-alpha-D-muramoyl-L-alanine + D-glutamate + ATP = UDP-N-acetyl-alpha-D-muramoyl-L-alanyl-D-glutamate + ADP + phosphate + H(+). The protein operates within cell wall biogenesis; peptidoglycan biosynthesis. Its function is as follows. Cell wall formation. Catalyzes the addition of glutamate to the nucleotide precursor UDP-N-acetylmuramoyl-L-alanine (UMA). The protein is UDP-N-acetylmuramoylalanine--D-glutamate ligase of Geobacillus sp. (strain WCH70).